The following is a 589-amino-acid chain: V-type ATP synthase alpha chain (589 aa).

232–239 lines the ATP pocket; that stretch reads GPFGSGKT.

The protein belongs to the ATPase alpha/beta chains family.

The enzyme catalyses ATP + H2O + 4 H(+)(in) = ADP + phosphate + 5 H(+)(out). In terms of biological role, produces ATP from ADP in the presence of a proton gradient across the membrane. The V-type alpha chain is a catalytic subunit. The polypeptide is V-type ATP synthase alpha chain (Acetivibrio thermocellus (strain ATCC 27405 / DSM 1237 / JCM 9322 / NBRC 103400 / NCIMB 10682 / NRRL B-4536 / VPI 7372) (Clostridium thermocellum)).